The chain runs to 583 residues: Steryl-sulfatase (583 aa).

Residues 1–21 (MPLRKMKIPFLLLFFLWEAES) form the signal peptide. The Lumenal segment spans residues 22 to 184 (HAASRPNIIL…GSVFTTGFKR (163 aa)). Residues aspartate 35 and aspartate 36 each coordinate Ca(2+). N-linked (GlcNAc...) asparagine glycosylation occurs at asparagine 47. Cysteine 75 lines the Ca(2+) pocket. The active-site Nucleophile is cysteine 75. Cysteine 75 carries the post-translational modification 3-oxoalanine (Cys). Histidine 136 is a catalytic residue. 2 cysteine pairs are disulfide-bonded: cysteine 141/cysteine 148 and cysteine 170/cysteine 242. Residues 185–208 (LVFLPLQIVGVTLLTLAALNCLGL) traverse the membrane as a helical segment. The Cytoplasmic segment spans residues 209-212 (LHVP). Residues 213-234 (LGVFFSLLFLAALILTLFLGFL) form a helical membrane-spanning segment. At 235–583 (HYFRPLNCFM…REKQDKRLSR (349 aa)) the chain is on the lumenal side. N-linked (GlcNAc...) asparagine glycosylation occurs at asparagine 259. Positions 342 and 343 each coordinate Ca(2+). 4 disulfide bridges follow: cysteine 446–cysteine 489, cysteine 481–cysteine 487, cysteine 562–cysteine 570, and cysteine 563–cysteine 572.

This sequence belongs to the sulfatase family. In terms of assembly, homodimer. Requires Ca(2+) as cofactor. In terms of processing, the conversion to 3-oxoalanine (also known as C-formylglycine, FGly), of a serine or cysteine residue in prokaryotes and of a cysteine residue in eukaryotes, is critical for catalytic activity.

Its subcellular location is the cytoplasmic vesicle. It localises to the secretory vesicle. The protein resides in the microneme membrane. It is found in the endoplasmic reticulum membrane. It carries out the reaction dehydroepiandrosterone 3-sulfate + H2O = 3beta-hydroxyandrost-5-en-17-one + sulfate + H(+). It catalyses the reaction estrone 3-sulfate + H2O = estrone + sulfate + H(+). In terms of biological role, catalyzes the conversion of sulfated steroid precursors, such as dehydroepiandrosterone sulfate (DHEA-S) and estrone sulfate to the free steroid. This is Steryl-sulfatase (STS) from Homo sapiens (Human).